We begin with the raw amino-acid sequence, 413 residues long: 2,3-bisphosphoglycerate-independent phosphoglycerate mutase (413 aa).

The protein belongs to the BPG-independent phosphoglycerate mutase family. A-PGAM subfamily.

The catalysed reaction is (2R)-2-phosphoglycerate = (2R)-3-phosphoglycerate. It functions in the pathway carbohydrate degradation; glycolysis; pyruvate from D-glyceraldehyde 3-phosphate: step 3/5. Functionally, catalyzes the interconversion of 2-phosphoglycerate and 3-phosphoglycerate. In Metallosphaera sedula (strain ATCC 51363 / DSM 5348 / JCM 9185 / NBRC 15509 / TH2), this protein is 2,3-bisphosphoglycerate-independent phosphoglycerate mutase.